The following is a 449-amino-acid chain: Ribosomal protein uS12 methylthiotransferase RimO (449 aa).

One can recognise an MTTase N-terminal domain in the interval 7 to 123 (QKVSMVSLGC…VAEILAEHHA (117 aa)). [4Fe-4S] cluster-binding residues include Cys-16, Cys-52, Cys-86, Cys-161, Cys-165, and Cys-168. Residues 147–377 (SSPGWYAYLK…MKTQARVSFR (231 aa)) form the Radical SAM core domain. Residues 380–448 (RAMVGQTEQV…DYDLVAEMIE (69 aa)) form the TRAM domain.

Belongs to the methylthiotransferase family. RimO subfamily. Requires [4Fe-4S] cluster as cofactor.

It localises to the cytoplasm. It catalyses the reaction L-aspartate(89)-[ribosomal protein uS12]-hydrogen + (sulfur carrier)-SH + AH2 + 2 S-adenosyl-L-methionine = 3-methylsulfanyl-L-aspartate(89)-[ribosomal protein uS12]-hydrogen + (sulfur carrier)-H + 5'-deoxyadenosine + L-methionine + A + S-adenosyl-L-homocysteine + 2 H(+). Catalyzes the methylthiolation of an aspartic acid residue of ribosomal protein uS12. This chain is Ribosomal protein uS12 methylthiotransferase RimO, found in Trichlorobacter lovleyi (strain ATCC BAA-1151 / DSM 17278 / SZ) (Geobacter lovleyi).